The following is a 252-amino-acid chain: Osmotin-like protein (252 aa).

The signal sequence occupies residues 1-24 (MASSSAKILLPLSLLFTLLSLSQS).

It is found in the secreted. The protein resides in the cell wall. This chain is Osmotin-like protein, found in Solanum lycopersicum (Tomato).